A 384-amino-acid polypeptide reads, in one-letter code: Bifunctional enzyme IspD/IspF (384 aa).

2-C-methyl-D-erythritol 4-phosphate cytidylyltransferase stretches follow at residues 1–227 and 1–228; these read MAKV…EGEQ and MAKV…GEQR. Residues 228–384 are 2-C-methyl-D-erythritol 2,4-cyclodiphosphate synthase; the sequence is RIGSGFDVHR…QATALITLPF (157 aa). 2 residues coordinate a divalent metal cation: D234 and H236. 4-CDP-2-C-methyl-D-erythritol 2-phosphate-binding positions include 234–236 and 260–261; these read DVH and HS. H268 lines the a divalent metal cation pocket. Residues 282–284, 358–361, F365, and R368 contribute to the 4-CDP-2-C-methyl-D-erythritol 2-phosphate site; these read DIG and TTTE.

In the N-terminal section; belongs to the IspD/TarI cytidylyltransferase family. IspD subfamily. This sequence in the C-terminal section; belongs to the IspF family. Requires a divalent metal cation as cofactor.

It carries out the reaction 2-C-methyl-D-erythritol 4-phosphate + CTP + H(+) = 4-CDP-2-C-methyl-D-erythritol + diphosphate. It catalyses the reaction 4-CDP-2-C-methyl-D-erythritol 2-phosphate = 2-C-methyl-D-erythritol 2,4-cyclic diphosphate + CMP. Its pathway is isoprenoid biosynthesis; isopentenyl diphosphate biosynthesis via DXP pathway; isopentenyl diphosphate from 1-deoxy-D-xylulose 5-phosphate: step 2/6. It participates in isoprenoid biosynthesis; isopentenyl diphosphate biosynthesis via DXP pathway; isopentenyl diphosphate from 1-deoxy-D-xylulose 5-phosphate: step 4/6. Bifunctional enzyme that catalyzes the formation of 4-diphosphocytidyl-2-C-methyl-D-erythritol from CTP and 2-C-methyl-D-erythritol 4-phosphate (MEP) (IspD), and catalyzes the conversion of 4-diphosphocytidyl-2-C-methyl-D-erythritol 2-phosphate (CDP-ME2P) to 2-C-methyl-D-erythritol 2,4-cyclodiphosphate (ME-CPP) with a corresponding release of cytidine 5-monophosphate (CMP) (IspF). The chain is Bifunctional enzyme IspD/IspF from Rhodospirillum rubrum (strain ATCC 11170 / ATH 1.1.1 / DSM 467 / LMG 4362 / NCIMB 8255 / S1).